A 218-amino-acid chain; its full sequence is Monomethylamine corrinoid protein 2 (218 aa).

Residues 1 to 91 (MTNTEIFNKL…ELEKTKVEGE (91 aa)) form the B12-binding N-terminal domain. The B12-binding domain occupies 94 to 218 (TGLAITFVAE…AAKVALNVMK (125 aa)). His107 contributes to the methylcob(III)alamin binding site.

It belongs to the methylamine corrinoid protein family. Can form a complex with MtmB.

It participates in one-carbon metabolism; methanogenesis from methylamine. Functionally, acts as a methyl group carrier between MtmB and MtbA. The chain is Monomethylamine corrinoid protein 2 (mtmC2) from Methanosarcina mazei (strain ATCC BAA-159 / DSM 3647 / Goe1 / Go1 / JCM 11833 / OCM 88) (Methanosarcina frisia).